Consider the following 360-residue polypeptide: Membrane-bound lytic murein transglycosylase C (360 aa).

The N-terminal stretch at 1–16 (MKKIFALALIAPLLIS) is a signal peptide. The N-palmitoyl cysteine moiety is linked to residue Cys17. Cys17 carries the S-diacylglycerol cysteine lipid modification.

The protein belongs to the transglycosylase Slt family.

The protein resides in the cell outer membrane. The catalysed reaction is Exolytic cleavage of the (1-&gt;4)-beta-glycosidic linkage between N-acetylmuramic acid (MurNAc) and N-acetylglucosamine (GlcNAc) residues in peptidoglycan, from either the reducing or the non-reducing ends of the peptidoglycan chains, with concomitant formation of a 1,6-anhydrobond in the MurNAc residue.. Murein-degrading enzyme. May play a role in recycling of muropeptides during cell elongation and/or cell division. This Cronobacter sakazakii (strain ATCC BAA-894) (Enterobacter sakazakii) protein is Membrane-bound lytic murein transglycosylase C.